The chain runs to 188 residues: Crossover junction endodeoxyribonuclease RuvC (188 aa).

Residues aspartate 14, glutamate 74, and aspartate 149 contribute to the active site. 3 residues coordinate Mg(2+): aspartate 14, glutamate 74, and aspartate 149.

The protein belongs to the RuvC family. Homodimer which binds Holliday junction (HJ) DNA. The HJ becomes 2-fold symmetrical on binding to RuvC with unstacked arms; it has a different conformation from HJ DNA in complex with RuvA. In the full resolvosome a probable DNA-RuvA(4)-RuvB(12)-RuvC(2) complex forms which resolves the HJ. Requires Mg(2+) as cofactor.

The protein resides in the cytoplasm. It carries out the reaction Endonucleolytic cleavage at a junction such as a reciprocal single-stranded crossover between two homologous DNA duplexes (Holliday junction).. Its function is as follows. The RuvA-RuvB-RuvC complex processes Holliday junction (HJ) DNA during genetic recombination and DNA repair. Endonuclease that resolves HJ intermediates. Cleaves cruciform DNA by making single-stranded nicks across the HJ at symmetrical positions within the homologous arms, yielding a 5'-phosphate and a 3'-hydroxyl group; requires a central core of homology in the junction. The consensus cleavage sequence is 5'-(A/T)TT(C/G)-3'. Cleavage occurs on the 3'-side of the TT dinucleotide at the point of strand exchange. HJ branch migration catalyzed by RuvA-RuvB allows RuvC to scan DNA until it finds its consensus sequence, where it cleaves and resolves the cruciform DNA. The polypeptide is Crossover junction endodeoxyribonuclease RuvC (Bacteroides fragilis (strain ATCC 25285 / DSM 2151 / CCUG 4856 / JCM 11019 / LMG 10263 / NCTC 9343 / Onslow / VPI 2553 / EN-2)).